A 134-amino-acid polypeptide reads, in one-letter code: NADPH-dependent 7-cyano-7-deazaguanine reductase (134 aa).

The active-site Thioimide intermediate is the C48. Catalysis depends on D55, which acts as the Proton donor. Residues 70-72 (VEL) and 89-90 (QE) each bind substrate.

It belongs to the GTP cyclohydrolase I family. QueF type 1 subfamily.

The protein resides in the cytoplasm. It carries out the reaction 7-aminomethyl-7-carbaguanine + 2 NADP(+) = 7-cyano-7-deazaguanine + 2 NADPH + 3 H(+). It participates in tRNA modification; tRNA-queuosine biosynthesis. In terms of biological role, catalyzes the NADPH-dependent reduction of 7-cyano-7-deazaguanine (preQ0) to 7-aminomethyl-7-deazaguanine (preQ1). In Caldanaerobacter subterraneus subsp. tengcongensis (strain DSM 15242 / JCM 11007 / NBRC 100824 / MB4) (Thermoanaerobacter tengcongensis), this protein is NADPH-dependent 7-cyano-7-deazaguanine reductase.